We begin with the raw amino-acid sequence, 214 residues long: Pyrrolidone-carboxylate peptidase 2 (214 aa).

Active-site residues include E78, C141, and H165.

This sequence belongs to the peptidase C15 family. Homotetramer.

Its subcellular location is the cytoplasm. The catalysed reaction is Release of an N-terminal pyroglutamyl group from a polypeptide, the second amino acid generally not being Pro.. Functionally, removes 5-oxoproline from various penultimate amino acid residues except L-proline. The protein is Pyrrolidone-carboxylate peptidase 2 of Streptococcus pneumoniae serotype 4 (strain ATCC BAA-334 / TIGR4).